The following is a 321-amino-acid chain: Lipoyl synthase (321 aa).

Positions 68, 73, 79, 94, 98, 101, and 308 each coordinate [4Fe-4S] cluster. Residues 80–297 (FNHGTATFMI…KAAAMDMGFT (218 aa)) enclose the Radical SAM core domain.

The protein belongs to the radical SAM superfamily. Lipoyl synthase family. [4Fe-4S] cluster is required as a cofactor.

Its subcellular location is the cytoplasm. The catalysed reaction is [[Fe-S] cluster scaffold protein carrying a second [4Fe-4S](2+) cluster] + N(6)-octanoyl-L-lysyl-[protein] + 2 oxidized [2Fe-2S]-[ferredoxin] + 2 S-adenosyl-L-methionine + 4 H(+) = [[Fe-S] cluster scaffold protein] + N(6)-[(R)-dihydrolipoyl]-L-lysyl-[protein] + 4 Fe(3+) + 2 hydrogen sulfide + 2 5'-deoxyadenosine + 2 L-methionine + 2 reduced [2Fe-2S]-[ferredoxin]. Its pathway is protein modification; protein lipoylation via endogenous pathway; protein N(6)-(lipoyl)lysine from octanoyl-[acyl-carrier-protein]: step 2/2. Catalyzes the radical-mediated insertion of two sulfur atoms into the C-6 and C-8 positions of the octanoyl moiety bound to the lipoyl domains of lipoate-dependent enzymes, thereby converting the octanoylated domains into lipoylated derivatives. This Erwinia tasmaniensis (strain DSM 17950 / CFBP 7177 / CIP 109463 / NCPPB 4357 / Et1/99) protein is Lipoyl synthase.